The following is a 207-amino-acid chain: Holliday junction resolvase RecU (207 aa).

The tract at residues Met-1–Ser-21 is disordered. The Mg(2+) site is built by Thr-87, Asp-89, Glu-102, and Gln-121.

The protein belongs to the RecU family. It depends on Mg(2+) as a cofactor.

The protein localises to the cytoplasm. It catalyses the reaction Endonucleolytic cleavage at a junction such as a reciprocal single-stranded crossover between two homologous DNA duplexes (Holliday junction).. Functionally, endonuclease that resolves Holliday junction intermediates in genetic recombination. Cleaves mobile four-strand junctions by introducing symmetrical nicks in paired strands. Promotes annealing of linear ssDNA with homologous dsDNA. Required for DNA repair, homologous recombination and chromosome segregation. This Lactiplantibacillus plantarum (strain ATCC BAA-793 / NCIMB 8826 / WCFS1) (Lactobacillus plantarum) protein is Holliday junction resolvase RecU.